Reading from the N-terminus, the 277-residue chain is Methyltransferase str3 (277 aa).

The protein belongs to the methyltransferase superfamily. LaeA methyltransferase family.

It participates in mycotoxin biosynthesis. Its function is as follows. Methyltransferase; part of the gene cluster that mediates the biosynthesis of strobilurin A, an antifungal polyketide that contains a key beta-methoxyacrylate toxophore that targets the complex III of the mitochondrial electron transport chain. Strobilurin biosynthesis begins with construction of benzoyl CoA by step-wise elimination of ammonia from phenylalanine by the phenylalanine ammonia-lyase str11, oxygenation by str8 and retro-Claisen reaction to form benzoic acid, which is activated to its CoA thiolester benzoyl CoA by the dedicated CoA ligase str10. Benzoyl CoA forms the starter unit for the highly reducing polyketide synthase stpks1 that produces the polyketide prestrobilutin A. The FAD-dependent oxygenase str9 then catalyzes the key oxidative rearrangement responsible for the creation of the beta-methoxyacrylate toxophore. Str9 performs epoxidation of the 2,3 olefin of prestrobilutin A, followed by Meinwald rearrangement to furnish the aldehyde intermediate. Rapid enolization of the aldehyde intermediate would give the beta-methoxyacrylate skeleton and methylations catalyzed by str2 and str3 complete the synthesis and lead to the production of strobilurin A. The short-chain dehydrogenase stl2 and the dehydrogenase str4 play a role in the shunt pathway leading to the production of bolineol. The cluster encodes no obvious halogenase gene that could be involved in production of strobilurin B, nor any obvious dimethylallyl-transferase that could be involved in the production of strobilurin G. It is possible that unknown proteins encoded in, or near, the cluster (such as str1 or stl1) may form new classes of halogenases or dimethylally-transferases, or that the responsible genes are located elsewhere on the genome. Similarly, proteins encoded by str5/str6 hydrolases appear to have no chemical role in the biosynthesis of strobilurin A. Finally, no obvious self-resistance gene is found within the cluster. This chain is Methyltransferase str3, found in Strobilurus tenacellus.